The following is a 62-amino-acid chain: Short neurotoxin 1 (62 aa).

Positions L1–G20 are disordered. 4 disulfide bridges follow: C3/C24, C17/C41, C43/C54, and C55/C60.

This sequence belongs to the three-finger toxin family. Short-chain subfamily. Type I alpha-neurotoxin sub-subfamily. In terms of tissue distribution, expressed by the venom gland.

It is found in the secreted. Its function is as follows. Binds to muscle nicotinic acetylcholine receptor (nAChR) and inhibit acetylcholine from binding to the receptor, thereby impairing neuromuscular transmission. The polypeptide is Short neurotoxin 1 (Naja mossambica (Mozambique spitting cobra)).